Consider the following 638-residue polypeptide: MIDTTRYPRLSRIQTPDDLRRFDEAELTAIAEELRSYLIESVGKSGGHFAAGLGVIELTVALHYLYQTPVDQLVWDVGHQTYPHKILTGRRDQIHTVKQKDGVAPFPKREESIYDTFGVGHSSTSISAALGMAIAAQRNGDDRKVVAVIGDGAMTAGMVYEALNHAGGMDPEPNLLVILNDNRMSISEAVGGLTKMLGRASGSRTLNAIREGGKKILGDKKNNPTARFVRRWEEHWKGMFVPSTLFEEMGFHYTGPIDGHDLPSLVGALKTLQTLKGPQLLHVITTKGKGYELAEGDQIGYHAVGPFDPSKGLVAKAGAKKPTYTDVFSDWVCDMAAAEPKLLVITPAMREGSGLVRFSKEYPQRYFDVAIAEQHAVTLAAGMATQGAKPVVAIYSTFLQRGYDQLVHDVAVQQLDVLFAIDRGGVVGPDGATHAGNLDLSFLRCVPHMVVMAPADEAECRQMLSTGVQYQGPAAVRYPRGTGPGVALDASLATLPIGKAQLRHSGTRIALLGFGATVDAAEAVGRELGLTVVNMRFVKPLDKAMLLELAKTHDGFVTIEDNVVAGGAGAGVSELLNAEAITMPMLHLGLPDSFQHHASREDLLAEAGIDQAGIRAAVLKRWPQLMTSKTPALNAAAG.

Residues histidine 79 and 120–122 (GHS) contribute to the thiamine diphosphate site. Aspartate 151 contacts Mg(2+). Thiamine diphosphate contacts are provided by residues 152 to 153 (GA), asparagine 182, tyrosine 291, and glutamate 373. Residue asparagine 182 coordinates Mg(2+).

The protein belongs to the transketolase family. DXPS subfamily. As to quaternary structure, homodimer. The cofactor is Mg(2+). Requires thiamine diphosphate as cofactor.

It catalyses the reaction D-glyceraldehyde 3-phosphate + pyruvate + H(+) = 1-deoxy-D-xylulose 5-phosphate + CO2. It participates in metabolic intermediate biosynthesis; 1-deoxy-D-xylulose 5-phosphate biosynthesis; 1-deoxy-D-xylulose 5-phosphate from D-glyceraldehyde 3-phosphate and pyruvate: step 1/1. In terms of biological role, catalyzes the acyloin condensation reaction between C atoms 2 and 3 of pyruvate and glyceraldehyde 3-phosphate to yield 1-deoxy-D-xylulose-5-phosphate (DXP). This is 1-deoxy-D-xylulose-5-phosphate synthase from Xanthomonas euvesicatoria pv. vesicatoria (strain 85-10) (Xanthomonas campestris pv. vesicatoria).